The chain runs to 205 residues: Cytochrome c oxidase subunit 2 (205 aa).

Cu cation-binding residues include histidine 115, cysteine 150, glutamate 152, cysteine 154, histidine 158, and methionine 161. Residue glutamate 152 coordinates Mg(2+).

This sequence belongs to the cytochrome c oxidase subunit 2 family. Component of the cytochrome c oxidase (complex IV, CIV), a multisubunit enzyme composed of a catalytic core of 3 subunits and several supernumerary subunits. The complex exists as a monomer or a dimer and forms supercomplexes (SCs) in the inner mitochondrial membrane with ubiquinol-cytochrome c oxidoreductase (cytochrome b-c1 complex, complex III, CIII). It depends on Cu cation as a cofactor.

It localises to the mitochondrion inner membrane. The enzyme catalyses 4 Fe(II)-[cytochrome c] + O2 + 8 H(+)(in) = 4 Fe(III)-[cytochrome c] + 2 H2O + 4 H(+)(out). Functionally, component of the cytochrome c oxidase, the last enzyme in the mitochondrial electron transport chain which drives oxidative phosphorylation. The respiratory chain contains 3 multisubunit complexes succinate dehydrogenase (complex II, CII), ubiquinol-cytochrome c oxidoreductase (cytochrome b-c1 complex, complex III, CIII) and cytochrome c oxidase (complex IV, CIV), that cooperate to transfer electrons derived from NADH and succinate to molecular oxygen, creating an electrochemical gradient over the inner membrane that drives transmembrane transport and the ATP synthase. Cytochrome c oxidase is the component of the respiratory chain that catalyzes the reduction of oxygen to water. Electrons originating from reduced cytochrome c in the intermembrane space (IMS) are transferred via the dinuclear copper A center (CU(A)) of subunit 2 and heme A of subunit 1 to the active site in subunit 1, a binuclear center (BNC) formed by heme A3 and copper B (CU(B)). The BNC reduces molecular oxygen to 2 water molecules using 4 electrons from cytochrome c in the IMS and 4 protons from the mitochondrial matrix. This chain is Cytochrome c oxidase subunit 2 (COII), found in Paramecium tetraurelia.